A 190-amino-acid chain; its full sequence is Potassium-transporting ATPase KdpC subunit (190 aa).

The chain crosses the membrane as a helical span at residues 10–30; the sequence is TFLFLLLITGGVYPLLTTALG.

The protein belongs to the KdpC family. In terms of assembly, the system is composed of three essential subunits: KdpA, KdpB and KdpC.

The protein localises to the cell inner membrane. Part of the high-affinity ATP-driven potassium transport (or Kdp) system, which catalyzes the hydrolysis of ATP coupled with the electrogenic transport of potassium into the cytoplasm. This subunit acts as a catalytic chaperone that increases the ATP-binding affinity of the ATP-hydrolyzing subunit KdpB by the formation of a transient KdpB/KdpC/ATP ternary complex. This chain is Potassium-transporting ATPase KdpC subunit, found in Escherichia coli O81 (strain ED1a).